We begin with the raw amino-acid sequence, 341 residues long: L-threonine 3-dehydrogenase (341 aa).

Position 38 (Cys-38) interacts with Zn(2+). Active-site charge relay system residues include Thr-40 and His-43. Zn(2+)-binding residues include His-63, Glu-64, Cys-93, Cys-96, Cys-99, and Cys-107. Residues Ile-175, Asp-195, Arg-200, 262–264 (LGI), and 286–287 (IY) each bind NAD(+).

Belongs to the zinc-containing alcohol dehydrogenase family. In terms of assembly, homotetramer. It depends on Zn(2+) as a cofactor.

Its subcellular location is the cytoplasm. The catalysed reaction is L-threonine + NAD(+) = (2S)-2-amino-3-oxobutanoate + NADH + H(+). The protein operates within amino-acid degradation; L-threonine degradation via oxydo-reductase pathway; glycine from L-threonine: step 1/2. Catalyzes the NAD(+)-dependent oxidation of L-threonine to 2-amino-3-ketobutyrate. In Klebsiella pneumoniae subsp. pneumoniae (strain ATCC 700721 / MGH 78578), this protein is L-threonine 3-dehydrogenase.